The following is a 250-amino-acid chain: MEIDLNADLGEGCGSDEALLDLVSSANIACGWHAGGANAMRDCVRWAVQKGVSIGAHPSFNDPENFGRKEMDLPASDIYAGVLYQLGALSAIAQAEGGRIAHVKPHGALYNQAARDSKIADAIVSAVHDFDPSVAVFALANSGLVTAARNAGLVAVEEVFADRGYRADGSLVPRKEPGALLDDEDEVLTRTLAMIREQRVQAVDGQWVSLNAQTICLHGDGPHALAFARRIRGALQDAGIEVHAAGAARA.

It belongs to the LamB/PxpA family. As to quaternary structure, forms a complex composed of PxpA, PxpB and PxpC.

It catalyses the reaction 5-oxo-L-proline + ATP + 2 H2O = L-glutamate + ADP + phosphate + H(+). Its function is as follows. Catalyzes the cleavage of 5-oxoproline to form L-glutamate coupled to the hydrolysis of ATP to ADP and inorganic phosphate. In Paraburkholderia phytofirmans (strain DSM 17436 / LMG 22146 / PsJN) (Burkholderia phytofirmans), this protein is 5-oxoprolinase subunit A.